The chain runs to 137 residues: Large ribosomal subunit protein uL16 (137 aa).

It belongs to the universal ribosomal protein uL16 family. In terms of assembly, part of the 50S ribosomal subunit.

In terms of biological role, binds 23S rRNA and is also seen to make contacts with the A and possibly P site tRNAs. The protein is Large ribosomal subunit protein uL16 of Ectopseudomonas mendocina (strain ymp) (Pseudomonas mendocina).